Consider the following 380-residue polypeptide: Cytochrome b (380 aa).

4 helical membrane passes run 34–54, 78–99, 114–134, and 179–199; these read FGSLLGICLATQILTGLLLAA, WLIRNLHANGASFFFICIYLHI, WNTGVILLLTLMATAFVGYVL, and FFTLHFLLPFMIMGLTLIHLT. Heme b is bound by residues H84 and H98. 2 residues coordinate heme b: H183 and H197. H202 is a binding site for a ubiquinone. Transmembrane regions (helical) follow at residues 227 to 247, 289 to 309, 321 to 341, and 348 to 368; these read LKDTLGFMFMLLPLMTLALFS, LGGVLALAASVLILFLAPLLH, LFQLLFWTLTANLLILTWVGS, and FIIIGQLASLTYFTILLILFP.

It belongs to the cytochrome b family. The cytochrome bc1 complex contains 11 subunits: 3 respiratory subunits (MT-CYB, CYC1 and UQCRFS1), 2 core proteins (UQCRC1 and UQCRC2) and 6 low-molecular weight proteins (UQCRH/QCR6, UQCRB/QCR7, UQCRQ/QCR8, UQCR10/QCR9, UQCR11/QCR10 and a cleavage product of UQCRFS1). This cytochrome bc1 complex then forms a dimer. Heme b serves as cofactor.

Its subcellular location is the mitochondrion inner membrane. Functionally, component of the ubiquinol-cytochrome c reductase complex (complex III or cytochrome b-c1 complex) that is part of the mitochondrial respiratory chain. The b-c1 complex mediates electron transfer from ubiquinol to cytochrome c. Contributes to the generation of a proton gradient across the mitochondrial membrane that is then used for ATP synthesis. The protein is Cytochrome b (MT-CYB) of Grus nigricollis (Black-necked crane).